We begin with the raw amino-acid sequence, 180 residues long: MSRVGKLPVKIPEKVKVSVDGNVVKVEGPKGKMHFPTNPLVSVQVDKGEVKVARQDESHVAKGLHGLTRTLVKNALEGVVKGYEKGLEINGVGFKAEVKGKDIHFTLGFSHPVVFKLPDGVTAEVDAKQTKLTIRSVDKHLLGLTAAKVRALRPPEPYKGKGIKYADETIRRKEGKTGAA.

The protein belongs to the universal ribosomal protein uL6 family. Part of the 50S ribosomal subunit.

In terms of biological role, this protein binds to the 23S rRNA, and is important in its secondary structure. It is located near the subunit interface in the base of the L7/L12 stalk, and near the tRNA binding site of the peptidyltransferase center. This chain is Large ribosomal subunit protein uL6, found in Anaeromyxobacter sp. (strain K).